The sequence spans 430 residues: MLDPNMLRNELDAVAEKLARRGFKLDVEVLRQQEERRKVLQVETESLQAERNSRSKQIGAAKARGEDIEPLRLEVNALGEKLDAAKAELDKLQNEIRDLALSIPNLPDDSVPVGKNENDNIEVSRWGEPRKYDFDVKDHVSLGEMAGGLDFAAAVKLTGARFVVMKGQIARMHRALSQFMLDLHTEKHGYLEAYVPYLVNHATLYGTGQLPKFGEDLFHTKPLAEESDNSNYALIPTAEVPLTNLVRDEILEEDSLPLKLTAHTPCFRSEAGSYGRDTRGLIRMHQFDKVEMVQITRPEDSMAALEELTGHAEKVLQLLELPYRKVLLCTGDMGFGSSKTYDLEVWLPAQDTYREISSCSNMWDFQARRMQARYRNKTDRKTRLVHTLNGSGLAVGRTLVAVLENYQQADGRIQVPDVLRPYMGGLEYIG.

An L-serine-binding site is contributed by 237–239 (TAE). Residue 268–270 (RSE) participates in ATP binding. L-serine is bound at residue Glu-291. Position 355-358 (355-358 (EISS)) interacts with ATP. Ser-391 contacts L-serine.

This sequence belongs to the class-II aminoacyl-tRNA synthetase family. Type-1 seryl-tRNA synthetase subfamily. In terms of assembly, homodimer. The tRNA molecule binds across the dimer.

It localises to the cytoplasm. It carries out the reaction tRNA(Ser) + L-serine + ATP = L-seryl-tRNA(Ser) + AMP + diphosphate + H(+). The enzyme catalyses tRNA(Sec) + L-serine + ATP = L-seryl-tRNA(Sec) + AMP + diphosphate + H(+). It participates in aminoacyl-tRNA biosynthesis; selenocysteinyl-tRNA(Sec) biosynthesis; L-seryl-tRNA(Sec) from L-serine and tRNA(Sec): step 1/1. Catalyzes the attachment of serine to tRNA(Ser). Is also able to aminoacylate tRNA(Sec) with serine, to form the misacylated tRNA L-seryl-tRNA(Sec), which will be further converted into selenocysteinyl-tRNA(Sec). The protein is Serine--tRNA ligase of Yersinia pseudotuberculosis serotype O:1b (strain IP 31758).